The chain runs to 293 residues: ATP synthase gamma chain (293 aa).

It belongs to the ATPase gamma chain family. In terms of assembly, F-type ATPases have 2 components, CF(1) - the catalytic core - and CF(0) - the membrane proton channel. CF(1) has five subunits: alpha(3), beta(3), gamma(1), delta(1), epsilon(1). CF(0) has three main subunits: a, b and c.

Its subcellular location is the cell membrane. In terms of biological role, produces ATP from ADP in the presence of a proton gradient across the membrane. The gamma chain is believed to be important in regulating ATPase activity and the flow of protons through the CF(0) complex. The protein is ATP synthase gamma chain of Methylacidiphilum infernorum (isolate V4) (Methylokorus infernorum (strain V4)).